The primary structure comprises 186 residues: Peptidyl-tRNA hydrolase (186 aa).

Tyr16 is a binding site for tRNA. The Proton acceptor role is filled by His21. TRNA-binding residues include Tyr66, Asn68, and Asn114.

This sequence belongs to the PTH family. As to quaternary structure, monomer.

It is found in the cytoplasm. The catalysed reaction is an N-acyl-L-alpha-aminoacyl-tRNA + H2O = an N-acyl-L-amino acid + a tRNA + H(+). Functionally, hydrolyzes ribosome-free peptidyl-tRNAs (with 1 or more amino acids incorporated), which drop off the ribosome during protein synthesis, or as a result of ribosome stalling. In terms of biological role, catalyzes the release of premature peptidyl moieties from peptidyl-tRNA molecules trapped in stalled 50S ribosomal subunits, and thus maintains levels of free tRNAs and 50S ribosomes. This chain is Peptidyl-tRNA hydrolase, found in Ureaplasma urealyticum serovar 10 (strain ATCC 33699 / Western).